We begin with the raw amino-acid sequence, 92 residues long: Small ribosomal subunit protein uS19 (92 aa).

This sequence belongs to the universal ribosomal protein uS19 family.

Protein S19 forms a complex with S13 that binds strongly to the 16S ribosomal RNA. The sequence is that of Small ribosomal subunit protein uS19 (rpsS) from Geobacillus stearothermophilus (Bacillus stearothermophilus).